Here is a 299-residue protein sequence, read N- to C-terminus: Oxygen-dependent coproporphyrinogen-III oxidase (299 aa).

Position 92 (Ser-92) interacts with substrate. Positions 96 and 106 each coordinate a divalent metal cation. The active-site Proton donor is the His-106. 108–110 (NVR) contributes to the substrate binding site. His-145 and His-175 together coordinate a divalent metal cation. An important for dimerization region spans residues 240–275 (YVEFNLVWDRGTLFGLQTGGRTESILMSMPPLVRWE). 258-260 (GGR) is a substrate binding site.

This sequence belongs to the aerobic coproporphyrinogen-III oxidase family. In terms of assembly, homodimer. It depends on a divalent metal cation as a cofactor.

The protein localises to the cytoplasm. It catalyses the reaction coproporphyrinogen III + O2 + 2 H(+) = protoporphyrinogen IX + 2 CO2 + 2 H2O. It participates in porphyrin-containing compound metabolism; protoporphyrin-IX biosynthesis; protoporphyrinogen-IX from coproporphyrinogen-III (O2 route): step 1/1. Functionally, involved in the heme biosynthesis. Catalyzes the aerobic oxidative decarboxylation of propionate groups of rings A and B of coproporphyrinogen-III to yield the vinyl groups in protoporphyrinogen-IX. This chain is Oxygen-dependent coproporphyrinogen-III oxidase, found in Salmonella choleraesuis (strain SC-B67).